The sequence spans 389 residues: 26S proteasome non-ATPase regulatory subunit 6 (389 aa).

Positions 193-361 constitute a PCI domain; it reads DFKQAAELFL…EVVETNRPDS (169 aa).

This sequence belongs to the proteasome subunit S10 family. Component of the 19S proteasome regulatory particle complex. The 26S proteasome consists of a 20S core particle (CP) and two 19S regulatory subunits (RP). The regulatory particle is made of a lid composed of 9 subunits including PSMD6, a base containing 6 ATPases and few additional components.

In terms of biological role, component of the 26S proteasome, a multiprotein complex involved in the ATP-dependent degradation of ubiquitinated proteins. This complex plays a key role in the maintenance of protein homeostasis by removing misfolded or damaged proteins, which could impair cellular functions, and by removing proteins whose functions are no longer required. Therefore, the proteasome participates in numerous cellular processes, including cell cycle progression, apoptosis, or DNA damage repair. This chain is 26S proteasome non-ATPase regulatory subunit 6 (PSMD6), found in Bos taurus (Bovine).